Consider the following 265-residue polypeptide: Zearalenone hydrolase (265 aa).

Zearalenone-binding residues include Gly35, Ser105, and Ser106. Ser105 is an active-site residue. Glu129 is an active-site residue. Zearalenone contacts are provided by Trp185, Tyr189, and His243. His243 is a catalytic residue.

This sequence belongs to the AB hydrolase superfamily. Hydrolase RutD family. Homodimer.

It catalyses the reaction zearalenone + H2O = hydrolyzed zearalenone + H(+). Functionally, lactonohydrolase that specifically hydrolyzes zearalenone (ZEN), an oestrogenic mycotoxin produced by numerous Fusarium specie, into a non-toxic alkylresorcinol product. The chain is Zearalenone hydrolase from Cladophialophora bantiana (strain ATCC 10958 / CDC1940 / 8579 / CBS 173.52) (Xylohypha bantiana).